A 30-amino-acid polypeptide reads, in one-letter code: Agglutinin alpha-1 chain (30 aa).

In terms of domain architecture, Jacalin-type lectin spans 1–30 (GVAFDDGSYTGIREINFEYNRETAIGGXQV).

This sequence belongs to the jacalin lectin family. As to quaternary structure, tetramer of four alpha chains associated with two or four beta chains.

In terms of biological role, N-acetyl-galactosamine and D-galactose specific lectin. Binds the Tn-antigen structure GalNAc-alpha-1-O-Ser, the T-antigen structure Gal-beta1-3-GalNAc and IgA. The polypeptide is Agglutinin alpha-1 chain (Morus nigra (Black mulberry)).